Here is a 358-residue protein sequence, read N- to C-terminus: 1-deoxy-D-xylulose 5-phosphate reductoisomerase (358 aa).

Positions 7, 8, 9, 10, 31, 33, and 114 each coordinate NADPH. Residue K115 participates in 1-deoxy-D-xylulose 5-phosphate binding. E116 is an NADPH binding site. D134 is a binding site for Mn(2+). The 1-deoxy-D-xylulose 5-phosphate site is built by S135, E136, S157, and H180. E136 is a Mn(2+) binding site. NADPH is bound at residue G186. 1-deoxy-D-xylulose 5-phosphate-binding residues include S193, N198, K199, and E202. E202 serves as a coordination point for Mn(2+).

It belongs to the DXR family. The cofactor is Mg(2+). Mn(2+) is required as a cofactor.

The enzyme catalyses 2-C-methyl-D-erythritol 4-phosphate + NADP(+) = 1-deoxy-D-xylulose 5-phosphate + NADPH + H(+). Its pathway is isoprenoid biosynthesis; isopentenyl diphosphate biosynthesis via DXP pathway; isopentenyl diphosphate from 1-deoxy-D-xylulose 5-phosphate: step 1/6. Its function is as follows. Catalyzes the NADPH-dependent rearrangement and reduction of 1-deoxy-D-xylulose-5-phosphate (DXP) to 2-C-methyl-D-erythritol 4-phosphate (MEP). This Wolinella succinogenes (strain ATCC 29543 / DSM 1740 / CCUG 13145 / JCM 31913 / LMG 7466 / NCTC 11488 / FDC 602W) (Vibrio succinogenes) protein is 1-deoxy-D-xylulose 5-phosphate reductoisomerase.